The chain runs to 496 residues: 1-aminocyclopropane-1-carboxylate synthase 4 (496 aa).

Lys-300 carries the post-translational modification N6-(pyridoxal phosphate)lysine.

The protein belongs to the class-I pyridoxal-phosphate-dependent aminotransferase family. The cofactor is pyridoxal 5'-phosphate. In terms of tissue distribution, expressed in leaves. Expressed in shoots and leaf blades. Expressed at low levels in leaf sheaths.

The enzyme catalyses S-adenosyl-L-methionine = 1-aminocyclopropane-1-carboxylate + S-methyl-5'-thioadenosine + H(+). It functions in the pathway alkene biosynthesis; ethylene biosynthesis via S-adenosyl-L-methionine; ethylene from S-adenosyl-L-methionine: step 1/2. Functionally, catalyzes the formation of 1-aminocyclopropane-1-carboxylate, a direct precursor of ethylene in higher plants. This chain is 1-aminocyclopropane-1-carboxylate synthase 4, found in Oryza sativa subsp. japonica (Rice).